Reading from the N-terminus, the 512-residue chain is Sucrose transport protein SUC2 (512 aa).

The Cytoplasmic portion of the chain corresponds to 1 to 31; it reads MVSHPMEKAANGASALETQTGELDQPERLRK. The chain crosses the membrane as a helical span at residues 32–52; sequence IISVSSIAAGVQFGWALQLSL. Residues 53–65 lie on the Extracellular side of the membrane; the sequence is LTPYVQLLGIPHK. Residues 66 to 86 form a helical membrane-spanning segment; it reads WASLIWLCGPISGMLVQPIVG. Over 87–100 the chain is Cytoplasmic; sequence YHSDRCTSRFGRRR. Residues 101 to 121 form a helical membrane-spanning segment; that stretch reads PFIVAGAGLVTVAVFLIGYAA. The Extracellular segment spans residues 122 to 138; that stretch reads DIGHSMGDQLDKPPKTR. A helical transmembrane segment spans residues 139-159; sequence AIAIFALGFWILDVANNTLQG. Residues 160–177 are Cytoplasmic-facing; sequence PCRAFLADLSAGNAKKTR. A helical membrane pass occupies residues 178-198; that stretch reads TANAFFSFFMAVGNVLGYAAG. At 199–223 the chain is on the extracellular side; the sequence is SYRNLYKVVPFTMTESCDLYCANLK. Residues 224 to 244 form a helical membrane-spanning segment; sequence TCFFLSITLLLIVTFVSLCYV. Over 245–278 the chain is Cytoplasmic; that stretch reads KEKPWTPEPTADGKASNVPFFGEIFGAFKELKRP. The helical transmembrane segment at 279–299 threads the bilayer; it reads MWMLLIVTALNWIAWFPFLLF. Topologically, residues 300 to 332 are extracellular; it reads DTDWMGREVYGGNSDATATAASKKLYNDGVRAG. The helical transmembrane segment at 333–353 threads the bilayer; that stretch reads ALGLMLNAIVLGFMSLGVEWI. Topologically, residues 354–362 are cytoplasmic; it reads GRKLGGAKR. Residues 363–383 traverse the membrane as a helical segment; it reads LWGIVNFILAICLAMTVVVTK. Over 384 to 407 the chain is Extracellular; it reads QAENHRRDHGGAKTGPPGNVTAGA. Asn-402 is a glycosylation site (N-linked (GlcNAc...) asparagine). A helical membrane pass occupies residues 408 to 428; sequence LTLFAILGIPQAITFSIPFAL. Residues 429–440 are Cytoplasmic-facing; the sequence is ASIFSTNSGAGQ. Residues 441–461 traverse the membrane as a helical segment; sequence GLSLGVLNLAIVVPQMVISVG. At 462-473 the chain is on the extracellular side; the sequence is GGPFDELFGGGN. The chain crosses the membrane as a helical span at residues 474 to 494; sequence IPAFVLGAIAAAVSGVLALTV. Over 495-512 the chain is Cytoplasmic; it reads LPSPPPDAPAFKATMGFH.

It belongs to the glycoside-pentoside-hexuronide (GPH) cation symporter transporter (TC 2.A.2.4) family. Homodimer. Interacts with SUC3 and SUC4. In terms of tissue distribution, expressed in leaves and, to a lower extent, in roots, flowers and stems. Highly specific to the phloem, exclusively localized in companion cells (at protein level).

The protein resides in the cell membrane. It catalyses the reaction sucrose(out) + H(+)(out) = sucrose(in) + H(+)(in). The protein operates within glycan biosynthesis; sucrose metabolism. Inhibited by protonophores (e.g. dinitrophenol and carbonyl cyanide m-chlorophenyl-hydrazone (CCCP)) and SH group inhibitors (e.g. N-ethylmaleimide (NEM) and p-chloromercuriphenyl sulphonic acid (PCMPS)). Its function is as follows. Responsible for the transport of sucrose into the cell, with the concomitant uptake of protons (symport system). Can also transport other glucosides such as maltose, arbutin (hydroquinone-beta-D-glucoside), salicin (2-(hydroxymethyl)phenyl-beta-D-glucoside), alpha-phenylglucoside, beta-phenylglucoside, alpha-paranitrophenylglucoside, beta-paranitrophenylglucoside, and paranitrophenyl-beta-thioglucoside. May also transport biotin. Required for apoplastic phloem sucrose loading in source tissues (e.g. leaves) in order to transport it to sink tissues (e.g. roots, flowers). The protein is Sucrose transport protein SUC2 of Arabidopsis thaliana (Mouse-ear cress).